We begin with the raw amino-acid sequence, 389 residues long: Succinate--CoA ligase [ADP-forming] subunit beta (389 aa).

Residues 9–244 (KEILRKFGVA…LDEEDPAEVE (236 aa)) enclose the ATP-grasp domain. Residues lysine 46, 53–55 (GRG), glutamate 99, alanine 102, and glutamate 107 contribute to the ATP site. 2 residues coordinate Mg(2+): asparagine 199 and aspartate 213. Substrate is bound by residues asparagine 264 and 321–323 (GIM).

It belongs to the succinate/malate CoA ligase beta subunit family. In terms of assembly, heterotetramer of two alpha and two beta subunits. Requires Mg(2+) as cofactor.

The enzyme catalyses succinate + ATP + CoA = succinyl-CoA + ADP + phosphate. It carries out the reaction GTP + succinate + CoA = succinyl-CoA + GDP + phosphate. It participates in carbohydrate metabolism; tricarboxylic acid cycle; succinate from succinyl-CoA (ligase route): step 1/1. Functionally, succinyl-CoA synthetase functions in the citric acid cycle (TCA), coupling the hydrolysis of succinyl-CoA to the synthesis of either ATP or GTP and thus represents the only step of substrate-level phosphorylation in the TCA. The beta subunit provides nucleotide specificity of the enzyme and binds the substrate succinate, while the binding sites for coenzyme A and phosphate are found in the alpha subunit. The protein is Succinate--CoA ligase [ADP-forming] subunit beta of Paraburkholderia phytofirmans (strain DSM 17436 / LMG 22146 / PsJN) (Burkholderia phytofirmans).